A 295-amino-acid polypeptide reads, in one-letter code: Tissue factor (295 aa).

The signal sequence occupies residues 1-28 (MAIPMRPRLLAALAPTFLGFLLLQVAVG). The Extracellular segment spans residues 29–252 (AGTPPGKAFN…TEQWKSVLGE (224 aa)). Asn38 and Asn58 each carry an N-linked (GlcNAc...) asparagine glycan. Cys76 and Cys84 form a disulfide bridge. N-linked (GlcNAc...) asparagine glycans are attached at residues Asn95, Asn109, Asn170, and Asn201. An intrachain disulfide couples Cys219 to Cys242. The WKS motif signature appears at 246 to 248 (WKS). The helical transmembrane segment at 253 to 275 (TLIIVGAVVFLVTVFIILLTISL) threads the bilayer. Cys276 carries S-palmitoyl cysteine lipidation. Over 276–295 (CKRRKNRAGQKRKNTPSRLA) the chain is Cytoplasmic.

Belongs to the tissue factor family. Interacts with HSPE; the interaction, inhibited by heparin, promotes the generation of activated factor X and activates coagulation in the presence of activated factor VII.

Its subcellular location is the membrane. Functionally, initiates blood coagulation by forming a complex with circulating factor VII or VIIa. The [TF:VIIa] complex activates factors IX or X by specific limited proteolysis. TF plays a role in normal hemostasis by initiating the cell-surface assembly and propagation of the coagulation protease cascade. This chain is Tissue factor (F3), found in Rattus norvegicus (Rat).